Here is a 750-residue protein sequence, read N- to C-terminus: von Willebrand factor A domain-containing protein DDB_G0292188 (750 aa).

The VWFA domain occupies 17-249 (EIKTVFNSDS…IKDDLLLDVV (233 aa)). 2 stretches are compositionally biased toward low complexity: residues 586–595 (SINDNNNSFN) and 603–645 (PFFE…SSAS). Positions 586-657 (SINDNNNSFN…PPPSQMLNEQ (72 aa)) are disordered.

The sequence is that of von Willebrand factor A domain-containing protein DDB_G0292188 from Dictyostelium discoideum (Social amoeba).